The following is a 396-amino-acid chain: MTTNTVSRKVAWLRVVTLAVAAFIFNTTEFVPVGLLSDIAQSFHMQTAQVGIMLTIYAWVVALMSLPFMLMTSQVERRKLLICLFVVFIASHVLSFLSWSFTVLVISRIGVAFAHAIFWSITASLAIRMAPAGKRAQALSLIATGTALAMVLGLPLGRIVGQYFGWRMTFFAIGIGALITLLCLIKLLPLLPSEHSGSLKSLPLLFRRPALMSIYLLTVVVVTAHYTAYSYIEPFVQNIAGFSANFATALLLLLGGAGIIGSVIFGKLGNQYASALVSTAIALLLVCLALLLPAANSEIHLGVLSIFWGIAMMIIGLGMQVKVLALAPDATDVAMALFSGIFNIGIGAGALVGNQVSLHLSMSMIGYVGTVPAFAALIWSIIIFRRWPVTLEEQTQ.

Transmembrane regions (helical) follow at residues 15-35 (VVTL…PVGL), 50-70 (VGIM…PFML), 81-101 (LICL…SWSF), 103-123 (VLVI…SITA), 136-156 (AQAL…GLPL), 170-190 (FFAI…LLPL), 209-229 (PALM…YTAY), 246-266 (FATA…VIFG), 275-295 (ALVS…LPAA), 299-319 (IHLG…GLGM), 333-353 (VAMA…ALVG), and 364-384 (MIGY…IIIF).

The protein belongs to the major facilitator superfamily. SotB (TC 2.A.1.2) family.

It localises to the cell inner membrane. Involved in the efflux of sugars. The physiological role may be the reduction of the intracellular concentration of toxic sugars or sugar metabolites. In Escherichia coli O157:H7 (strain EC4115 / EHEC), this protein is Probable sugar efflux transporter.